The primary structure comprises 205 residues: Imidazoleglycerol-phosphate dehydratase (205 aa).

The interval 1–27 is disordered; it reads MKQASPRAGGAKARRGQVARKTKETDV.

It belongs to the imidazoleglycerol-phosphate dehydratase family.

The protein localises to the cytoplasm. It catalyses the reaction D-erythro-1-(imidazol-4-yl)glycerol 3-phosphate = 3-(imidazol-4-yl)-2-oxopropyl phosphate + H2O. It participates in amino-acid biosynthesis; L-histidine biosynthesis; L-histidine from 5-phospho-alpha-D-ribose 1-diphosphate: step 6/9. This Anaeromyxobacter sp. (strain Fw109-5) protein is Imidazoleglycerol-phosphate dehydratase.